A 590-amino-acid chain; its full sequence is Ras-specific guanine nucleotide-releasing factor RalGPS2 (590 aa).

The 239-residue stretch at threonine 49–glycine 287 folds into the Ras-GEF domain. A disordered region spans residues alanine 288 to alanine 319. Residues serine 293, serine 296, and serine 308 each carry the phosphoserine modification. Positions proline 331–proline 334 match the PXXP motif. At threonine 333 the chain carries Phosphothreonine. Phosphoserine is present on residues serine 336 and serine 350. Threonine 368 carries the phosphothreonine modification. The tract at residues aspartate 380 to serine 413 is disordered. Serine 381 carries the post-translational modification Phosphoserine. Positions glutamate 394 to serine 410 are enriched in low complexity. Serine 429 bears the Phosphoserine mark. Residues alanine 464–glutamine 576 form the PH domain. The tract at residues threonine 466–glutamate 590 is required for stimulation of nucleotide exchange by RALA.

In terms of assembly, interacts with RALA. Interacts with the SH3 domains of GRB2 and PLCG1. Abundant in brain and testis.

It localises to the cytoplasm. It is found in the cell membrane. In terms of biological role, guanine nucleotide exchange factor for the small GTPase RALA. May be involved in cytoskeletal organization. May also be involved in the stimulation of transcription in a Ras-independent fashion. The polypeptide is Ras-specific guanine nucleotide-releasing factor RalGPS2 (Ralgps2) (Mus musculus (Mouse)).